The chain runs to 1222 residues: MLAPRNTETGVPMSQTEADLALRPSPALTSTGPTRLGPPPRRVRRFSGKAEPRPRSSRPSRRSSVDLGLLSSWSQPASLLPEPPDPPDSAGPTRSPPSSSKEPPEGTWMGAAPVKAVDSACPELTGSSGGPGSREPPRVPDAAARERRREQEEKEDTETQAVATSPDGRYLKFDIEIGRGSFKTVYRGLDTDTTVEVAWCELQTRKLSRAERQRFSEEVEMLKGLQHPNIVRFYDSWKSVLRGQVCIVLVTELMTSGTLKTYLRRFREMKPRVLQRWSRQILRGLHFLHSRVPPILHRDLKCDNVFITGPSGSVKIGDLGLATLKRASFAKSVIGTPEFMAPEMYEEKYDEAVDVYAFGMCMLEMATSEYPYSECQNAAQIYRKVTSGTKPNSFYKVKMPEVKEIIEGCIRTDKNERFTIQDLLAHAFFREERGVHVELAEEDDGEKPGLKLWLRMEDARRGGRPRDNQAIEFLFQLGRDAAEEVAQEMVALGLVCEADYQPVARAVRERVAAIQRKREKLRKARELEVLPPDSGPPPATVSLAPGPPSAFPPEPEEPEADQHQSFLFRHASYSSTTSDCETDGYLSSSGFLDASDPALQPPGGLPSSPAESHLCLPSGFALSIPRSGPGSDFSPGDSYASDAASGLSDMGEGGQMRKNPVKTLRRRPRSRLRVTSVSDQSDRVVECQLQTHNSKMVTFRFDLDGDSPEEIAAAMVYNEFILPSERDGFLSRIREIIQRVETLLKRDAGPPEAAEDALSPQEEPAALPALPGPPNAEPQRSISPEQRSWAAFSTSPSSPGTPLSPGAPFSPGTPPVFPCPIFPITSPSCYPCPFSQVSSNPYPQAPSSLLPLSSSASQVPLPSSSLPISAPLPFSPSYPQDPLSPTSLPVCPSPPSLPSTTAAPLLSLASAFSLAVMTVAQSLLSPSPGLLSQSPPAPPGPLPSLPLSLASCDQESLSAQTAETENEASRNPAQPLLGDARLAPISEEGKPQLVGRFQVTSSKEPAEPPLQPASPTLSRSLKLPSPPLTSESSDTEDSAAGGPETREALAESDRAAEGLGVAVDDEKDEGKEPLLGGSSPILSHPSPVWMNYSYSSLCLSSEESESSGEDEEFWAELQNLRQKHLSEVEALQTLQKKEIEDLYSRLGKQPPPGIVAPAAMLSCRQRRLSKGSFPTSRRNSLQRSDLPGPGIMRRNSLSGSSTGSQEQRASKGVTFAGDIGRM.

Polar residues predominate over residues 1–17 (MLAPRNTETGVPMSQTE). The interval 1-165 (MLAPRNTETG…DTETQAVATS (165 aa)) is disordered. The segment covering 90-101 (AGPTRSPPSSSK) has biased composition (low complexity). Position 95 is a phosphoserine (Ser-95). The span at 135–152 (EPPRVPDAAARERRREQE) shows a compositional bias: basic and acidic residues. Residues Lys-154 and Lys-172 each participate in a glycyl lysine isopeptide (Lys-Gly) (interchain with G-Cter in ubiquitin) cross-link. Residues 171 to 429 (LKFDIEIGRG…IQDLLAHAFF (259 aa)) enclose the Protein kinase domain. Ser-181 is an ATP binding site. Glycyl lysine isopeptide (Lys-Gly) (interchain with G-Cter in ubiquitin) cross-links involve residues Lys-183, Lys-223, and Lys-238. ATP is bound by residues 251–254 (TELM) and Lys-301. Asp-318 (proton acceptor) is an active-site residue. Lys-325 participates in a covalent cross-link: Glycyl lysine isopeptide (Lys-Gly) (interchain with G-Cter in ubiquitin). Phosphoserine; by autocatalysis is present on residues Ser-328 and Ser-332. Glycyl lysine isopeptide (Lys-Gly) (interchain with G-Cter in ubiquitin) cross-links involve residues Lys-384, Lys-390, Lys-447, and Lys-451. The tract at residues 525-562 (RELEVLPPDSGPPPATVSLAPGPPSAFPPEPEEPEADQ) is disordered. The segment covering 533-553 (DSGPPPATVSLAPGPPSAFPP) has biased composition (pro residues). Positions 554–564 (EPEEPEADQHQ) are interaction with KLHL3. Residue Ser-572 is modified to Phosphoserine. Disordered stretches follow at residues 626 to 659 (RSGPGSDFSPGDSYASDAASGLSDMGEGGQMRKN), 747 to 809 (DAGP…GAPF), 877 to 896 (SYPQDPLSPTSLPVCPSPPS), and 927 to 976 (SPGL…AQPL). Composition is skewed to low complexity over residues 627 to 638 (SGPGSDFSPGDS), 757 to 769 (ALSPQEEPAALPA), 793 to 807 (STSPSSPGTPLSPGA), and 877 to 890 (SYPQDPLSPTSLPV). The span at 935 to 944 (PPAPPGPLPS) shows a compositional bias: pro residues. A compositionally biased stretch (polar residues) spans 953–963 (DQESLSAQTAE). A Glycyl lysine isopeptide (Lys-Gly) (interchain with G-Cter in ubiquitin) cross-link involves residue Lys-990. The RFXV motif motif lies at 996-999 (RFQV). A disordered region spans residues 1000–1087 (TSSKEPAEPP…SSPILSHPSP (88 aa)). Ser-1014 is subject to Phosphoserine. Positions 1014–1032 (SPTLSRSLKLPSPPLTSES) are enriched in low complexity. Residues 1044–1056 (ETREALAESDRAA) show a composition bias toward basic and acidic residues. Residues Lys-1123, Lys-1136, and Lys-1137 each participate in a glycyl lysine isopeptide (Lys-Gly) (interchain with G-Cter in ubiquitin) cross-link. The interval 1166–1222 (RRLSKGSFPTSRRNSLQRSDLPGPGIMRRNSLSGSSTGSQEQRASKGVTFAGDIGRM) is disordered. 2 stretches are compositionally biased toward polar residues: residues 1172-1183 (SFPTSRRNSLQR) and 1195-1207 (NSLSGSSTGSQEQ). At Ser-1196 the chain carries Phosphoserine.

The protein belongs to the protein kinase superfamily. Ser/Thr protein kinase family. WNK subfamily. In terms of assembly, interacts with the C-terminal region of KCNJ1. Interacts with WNK1 and WNK3. Interacts with KLHL3. Mg(2+) is required as a cofactor. Post-translationally, autophosphorylated at Ser-328 and Ser-332, promoting its activation. Phosphorylated by WNK1 and WNK3. Phosphorylated at Ser-572 in a MAP3K15/ASK3-dependent process in response to osmotic stress or hypotonic low-chloride stimulation. Ubiquitinated by the BCR(KLHL3) complex, leading to its degradation. Also ubiquitinated by the BCR(KLHL2) complex. In terms of tissue distribution, locates to the distal convoluted tubule, the medullary collecting duct and the cortical collecting duct of the kidney. Expressed in pancreatic duct.

It localises to the cell junction. The protein resides in the tight junction. The enzyme catalyses L-seryl-[protein] + ATP = O-phospho-L-seryl-[protein] + ADP + H(+). The catalysed reaction is L-threonyl-[protein] + ATP = O-phospho-L-threonyl-[protein] + ADP + H(+). Activation requires autophosphorylation of Ser-328 and Ser-332. Autophosphorylation and subsequent activation is inhibited by increases in intracellular ionic strength: Cl(-) potently inhibits WNK4 kinase activity via direct binding. Also inhibited by K(+) ions. Functionally, serine/threonine-protein kinase component of the WNK4-SPAK/OSR1 kinase cascade, which acts as a key regulator of ion transport in the distal nephron and blood pressure. The WNK4-SPAK/OSR1 kinase cascade is composed of WNK4, which mediates phosphorylation and activation of downstream kinases OXSR1/OSR1 and STK39/SPAK. Following activation, OXSR1/OSR1 and STK39/SPAK catalyze phosphorylation of ion cotransporters, such as SLC12A1/NKCC2, SLC12A2/NKCC1, SLC12A3/NCC, SLC12A5/KCC2 or SLC12A6/KCC3, regulating their activity. Acts as a molecular switch that regulates the balance between renal salt reabsorption and K(+) secretion by modulating the activities of renal transporters and channels, including the Na-Cl cotransporter SLC12A3/NCC and the K(+) channel, KCNJ1/ROMK. Regulates NaCl reabsorption in the distal nephron by activating the thiazide-sensitive Na-Cl cotransporter SLC12A3/NCC in distal convoluted tubule cells of kidney: activates SLC12A3/NCC in a OXSR1/OSR1- and STK39/SPAK-dependent process. Also acts as a scaffold protein independently of its protein kinase activity: negatively regulates cell membrane localization of various transporters and channels (CFTR, KCNJ1/ROMK, SLC4A4, SLC26A9 and TRPV4) by clathrin-dependent endocytosis. Also inhibits the activity of the epithelial Na(+) channel (ENaC) SCNN1A, SCNN1B, SCNN1D in a inase-independent mechanism. May also phosphorylate NEDD4L. This chain is Serine/threonine-protein kinase WNK4, found in Mus musculus (Mouse).